We begin with the raw amino-acid sequence, 257 residues long: Imidazole glycerol phosphate synthase subunit HisF (257 aa).

Catalysis depends on residues Asp-12 and Asp-131.

The protein belongs to the HisA/HisF family. In terms of assembly, heterodimer of HisH and HisF.

The protein resides in the cytoplasm. The enzyme catalyses 5-[(5-phospho-1-deoxy-D-ribulos-1-ylimino)methylamino]-1-(5-phospho-beta-D-ribosyl)imidazole-4-carboxamide + L-glutamine = D-erythro-1-(imidazol-4-yl)glycerol 3-phosphate + 5-amino-1-(5-phospho-beta-D-ribosyl)imidazole-4-carboxamide + L-glutamate + H(+). It participates in amino-acid biosynthesis; L-histidine biosynthesis; L-histidine from 5-phospho-alpha-D-ribose 1-diphosphate: step 5/9. Its function is as follows. IGPS catalyzes the conversion of PRFAR and glutamine to IGP, AICAR and glutamate. The HisF subunit catalyzes the cyclization activity that produces IGP and AICAR from PRFAR using the ammonia provided by the HisH subunit. This Marinobacter nauticus (strain ATCC 700491 / DSM 11845 / VT8) (Marinobacter aquaeolei) protein is Imidazole glycerol phosphate synthase subunit HisF.